We begin with the raw amino-acid sequence, 119 residues long: UPF0231 protein YPTB0717 (119 aa).

Belongs to the UPF0231 family.

This chain is UPF0231 protein YPTB0717, found in Yersinia pseudotuberculosis serotype I (strain IP32953).